Here is an 840-residue protein sequence, read N- to C-terminus: Phosphatidylinositol-3-phosphatase myotubularin-1 (840 aa).

A disordered region spans residues 1–28 (MTPPRPPSGRVRSLRDYSSESEKMDGTG). The segment covering 13-25 (SLRDYSSESEKMD) has biased composition (basic and acidic residues). Positions 45–112 (GSFSNLSCLL…ATIEKFNKMV (68 aa)) constitute a GRAM domain. The region spanning 199-650 (GKSSIRASMD…LAPTLWPQFH (452 aa)) is the Myotubularin phosphatase domain. Residues 332 to 335 (NGAM), 357 to 358 (NI), 443 to 449 (CSDGWDR), and Arg489 contribute to the substrate site. The Phosphocysteine intermediate role is filled by Cys443. The interval 506 to 535 (QSSSAGSFPSSPVRQSSGSAASQSSSSSHG) is disordered. Over residues 507-535 (SSSAGSFPSSPVRQSSGSAASQSSSSSHG) the composition is skewed to low complexity. Residues 666 to 734 (VQCRAMTVKY…AALTRAVQSL (69 aa)) are a coiled coil. Positions 745–771 (VEDDPRSSLENNPRRRNRHGNNSDVSV) are disordered.

This sequence belongs to the protein-tyrosine phosphatase family. Non-receptor class myotubularin subfamily. In terms of tissue distribution, mostly expressed in siliques and leaves (including hydathodes), and, to a lower extent, in flowers and roots.

It is found in the cytoplasm. It localises to the endosome membrane. The catalysed reaction is a 1,2-diacyl-sn-glycero-3-phospho-(1D-myo-inositol-3-phosphate) + H2O = a 1,2-diacyl-sn-glycero-3-phospho-(1D-myo-inositol) + phosphate. It catalyses the reaction a 1,2-diacyl-sn-glycero-3-phospho-(1D-myo-inositol-3,5-bisphosphate) + H2O = a 1,2-diacyl-sn-glycero-3-phospho-(1D-myo-inositol-5-phosphate) + phosphate. In terms of biological role, phosphatase with phosphoinositide 3'-phosphatase activity that can use phosphatidylinositol-3-phosphate (PtdIns3P) and phosphatidylinositol-3,5-diphosphate (PtdIns3,5P(2)) as substrates and produces phosphatidylinositol-5-phosphate (PtdIns5P); participates in pathway(s) that transfer gene regulatory signals to the nucleus. Required for recovery after water deprivation, via the accumulation of PtdIns5P upon dehydration; high PtdIns5P levels mediate ATX1 cytoplasmic localization, thus down-regulating the expression of ATX1-dependent genes. Confers sensitivity to soil-water-deficit stress. The chain is Phosphatidylinositol-3-phosphatase myotubularin-1 (MTM1) from Arabidopsis thaliana (Mouse-ear cress).